Reading from the N-terminus, the 1150-residue chain is Serine/threonine-protein phosphatase 2A regulatory subunit B'' subunit alpha (1150 aa).

The interval 661–693 is disordered; the sequence is PEVIKIQNKPEKKPGTPLPPPATSPSSPRPLSP. Residues 676–693 show a composition bias toward pro residues; that stretch reads TPLPPPATSPSSPRPLSP. EF-hand domains are found at residues 758–793 and 972–1007; these read CPLY…LLNN and RNPT…QCER. Positions 985, 987, 989, and 996 each coordinate Ca(2+). Positions 1105–1132 are disordered; the sequence is AQFQEGFEDYETDEPASPSEFGNKSNKI.

In terms of assembly, PP2A consists of a common heterodimeric core enzyme, composed of a 36 kDa catalytic subunit (subunit C) and a 65 kDa constant regulatory subunit (PR65 or subunit A), that associates with a variety of regulatory subunits. Proteins that associate with the core dimer include three families of regulatory subunits B (the R2/B/PR55/B55, R3/B''/PR72/PR130/PR59 and R5/B'/B56 families), the 48 kDa variable regulatory subunit, viral proteins, and cell signaling molecules. Expressed in heart, brain, placenta, lung, muscle and kidney.

In terms of biological role, the B regulatory subunit might modulate substrate selectivity and catalytic activity, and might also direct the localization of the catalytic enzyme to a particular subcellular compartment. This is Serine/threonine-protein phosphatase 2A regulatory subunit B'' subunit alpha (PPP2R3A) from Homo sapiens (Human).